A 208-amino-acid chain; its full sequence is uncharacterized protein (208 aa).

4 4Fe-4S ferredoxin-type domains span residues 59-88, 114-145, 147-176, and 174-203; these read GVLV…SVGT, GDLN…WQQK, GCIT…VNTE, and NTES…IIEW. [4Fe-4S] cluster contacts are provided by cysteine 68, cysteine 71, cysteine 74, cysteine 78, cysteine 123, cysteine 126, cysteine 131, cysteine 135, cysteine 156, cysteine 159, cysteine 162, cysteine 166, cysteine 183, cysteine 186, cysteine 189, and cysteine 193.

This is an uncharacterized protein from Escherichia coli O157:H7.